Consider the following 200-residue polypeptide: Type 1 fimbriae regulatory protein FimB (200 aa).

One can recognise a Tyr recombinase domain in the interval 8 to 189 (KKRNFLTHSE…NAGRFYGIWD (182 aa)). Residues Arg-47, Lys-72, His-141, Arg-144, and His-167 contribute to the active site. Tyr-176 (O-(3'-phospho-DNA)-tyrosine intermediate) is an active-site residue.

Belongs to the 'phage' integrase family.

In terms of biological role, fimB is one of the 2 regulatory proteins which control the phase variation of type 1 fimbriae in E.coli. These proteins mediate the periodic inversion of a 300bp DNA segment that harbors the promoter for the fimbrial structural gene, fimA. FimB switches fimA on. The sequence is that of Type 1 fimbriae regulatory protein FimB (fimB) from Escherichia coli O157:H7.